We begin with the raw amino-acid sequence, 275 residues long: Transmembrane protein 106B (275 aa).

Residues 1 to 24 (MGKSFSHLPLHSNKEDGYDGMTST) form a disordered region. Residue Gly-2 is the site of N-myristoyl glycine attachment. The Cytoplasmic portion of the chain corresponds to 2 to 97 (GKSFSHLPLH…QRLRPRRTKL (96 aa)). Residues 98–118 (YVMASVFVCLLLSGLAVFFLF) form a helical membrane-spanning segment. Over 119–275 (PRSIDVKYIG…EYLNVLQPQQ (157 aa)) the chain is Lumenal. N-linked (GlcNAc...) asparagine glycosylation is found at Asn-146, Asn-152, Asn-165, and Asn-184. Cys-215 and Cys-254 form a disulfide bridge. Residue Asn-257 is glycosylated (N-linked (GlcNAc...) asparagine).

Belongs to the TMEM106 family. Can form homomers. Interacts (via N-terminus) with MAP6 (via C-terminus). Interacts (via C-terminus) with the vacuolar-type ATPase subunit ATP6AP1. Interacts (via N-terminus) with AP2M1 and CLTC. Interacts with TMEM106C.

It is found in the late endosome membrane. The protein resides in the lysosome membrane. The protein localises to the cell membrane. In neurons, involved in the transport of late endosomes/lysosomes. May be involved in dendrite morphogenesis and maintenance by regulating lysosomal trafficking. May act as a molecular brake for retrograde transport of late endosomes/lysosomes, possibly via its interaction with MAP6. In motoneurons, may mediate the axonal transport of lysosomes and axonal sorting at the initial segment. It remains unclear whether TMEM106B affects the transport of moving lysosomes in the anterograde or retrograde direction in neurites and whether it is particularly important in the sorting of lysosomes in axons or in dendrites. In neurons, may also play a role in the regulation of lysosomal size and responsiveness to stress. Required for proper lysosomal acidification. In Bos taurus (Bovine), this protein is Transmembrane protein 106B (TMEM106B).